The chain runs to 355 residues: Green-sensitive opsin (355 aa).

The Extracellular portion of the chain corresponds to 1-36 (MNGTEGINFYVPMSNKTGVVRSPFEYPQYYLAEPWK). 2 N-linked (GlcNAc...) asparagine glycosylation sites follow: Asn-2 and Asn-15. Residues 37–61 (YRLVCCYIFFLISTGLPINLLTLLV) traverse the membrane as a helical segment. The Cytoplasmic segment spans residues 62 to 73 (TFKHKKLRQPLN). Residues 74–99 (YILVNLAVADLFMACFGFTVTFYTAW) form a helical membrane-spanning segment. Topologically, residues 100–113 (NGYFVFGPVGCAVE) are extracellular. A disulfide bridge connects residues Cys-110 and Cys-187. The chain crosses the membrane as a helical span at residues 114–133 (GFFATLGGQVALWSLVVLAI). The Cytoplasmic portion of the chain corresponds to 134 to 152 (ERYIVVCKPMGNFRFSATH). The helical transmembrane segment at 153 to 176 (AMMGIAFTWVMAFSCAAPPLFGWS) threads the bilayer. The Extracellular segment spans residues 177 to 202 (RYMPEGMQCSCGPDYYTHNPDYHNES). A helical transmembrane segment spans residues 203–230 (YVLYMFVIHFIIPVVVIFFSYGRLICKV). Residues 231 to 252 (REAAAQQQESATTQKAEKEVTR) lie on the Cytoplasmic side of the membrane. The chain crosses the membrane as a helical span at residues 253–276 (MVILMVLGFMLAWTPYAVVAFWIF). Residues 277–284 (TNKGADFT) lie on the Extracellular side of the membrane. A helical transmembrane segment spans residues 285-309 (ATLMAVPAFFSKSSSLYNPIIYVLM). Position 296 is an N6-(retinylidene)lysine (Lys-296). Residues 310-355 (NKQFRNCMITTICCGKNPFGDEDVSSTVSQSKTEVSSVSSSQVSPA) are Cytoplasmic-facing.

This sequence belongs to the G-protein coupled receptor 1 family. Opsin subfamily. Phosphorylated on some or all of the serine and threonine residues present in the C-terminal region. In terms of tissue distribution, the color pigments are found in the cone photoreceptor cells.

The protein resides in the membrane. Its function is as follows. Visual pigments are the light-absorbing molecules that mediate vision. They consist of an apoprotein, opsin, covalently linked to cis-retinal. The polypeptide is Green-sensitive opsin (PRA1) (Gallus gallus (Chicken)).